The primary structure comprises 620 residues: Eukaryotic translation initiation factor 2-alpha kinase 1 (620 aa).

A disordered region spans residues 1-38; the sequence is MLGGGSVDGERDTDDDAAGAVAAPPAIDFPAEVSDPKY. Residues 18–28 show a composition bias toward low complexity; that stretch reads AGAVAAPPAID. Positions 85–104 match the SIFI-degron motif; it reads LHSKQVFKLLCQTFIKMGLL. The 415-residue stretch at 167–581 folds into the Protein kinase domain; that stretch reads FEELAILGKG…ALQLLQSELF (415 aa). Residues 173 to 181 and Lys-196 contribute to the ATP site; that span reads LGKGGYGRV. Thr-283 is modified (phosphothreonine). Residues 408 to 413 form an HRM 1 repeat; it reads ACPYVM. Asp-440 serves as the catalytic Proton acceptor. Phosphothreonine; by autocatalysis is present on residues Thr-484 and Thr-486. Thr-491 carries the post-translational modification Phosphothreonine. One copy of the HRM 2 repeat lies at 550 to 555; it reads RCPVQA.

The protein belongs to the protein kinase superfamily. Ser/Thr protein kinase family. GCN2 subfamily. Synthesized in an inactive form that binds to the N-terminal domain of CDC37. Has to be associated with a multiprotein complex containing Hsp90, CDC37 and PPP5C for maturation and activation by autophosphorylation. The phosphatase PPP5C modulates this activation. Homodimer; homodimerizes in presence of heme, forming a disulfide-linked inactive homodimer. Interacts with DELE1; binds both to full-length DELE1 and processed form of DELE1 (S-DELE1) in response to stress, leading to activate its protein kinase activity and trigger the integrated stress response (ISR). Activated by autophosphorylation; phosphorylated predominantly on serine and threonine residues, but also on tyrosine residues. Autophosphorylation at Thr-486 is required for kinase activation. The active autophosphorylated form apparently is largely refractory to cellular heme fluctuations. Post-translationally, ubiquitinated and degraded by the SIFI complex once the mitochondrial stress has been resolved, thereby providing stress response silencing. Within the SIFI complex, UBR4 initiates ubiquitin chain that are further elongated or branched by KCMF1.

Its subcellular location is the cytoplasm. It catalyses the reaction L-seryl-[protein] + ATP = O-phospho-L-seryl-[protein] + ADP + H(+). It carries out the reaction L-threonyl-[protein] + ATP = O-phospho-L-threonyl-[protein] + ADP + H(+). With respect to regulation, in normal conditions, the protein kinase activity is inhibited; inhibition is relieved by various stress conditions. Inhibited by heme: in presence of heme, forms a disulfide-linked inactive homodimer. Heme depletion relieves inhibition and stimulates kinase activity by autophosphorylation. Inhibited by the heme metabolites biliverdin and bilirubin. Induced by oxidative stress generated by arsenite treatment. Binding of nitric oxide (NO) to the heme iron in the N-terminal heme-binding domain activates the kinase activity, while binding of carbon monoxide (CO) suppresses kinase activity. Protein kinase activity is also activated upon binding to DELE1 in response to various stress, triggering the integrated stress response (ISR): activated by full-length DELE1 in response to iron deficiency, while it is activated by the processed form of DELE1 (S-DELE1) in response to mitochondrial stress. Its function is as follows. Metabolic-stress sensing protein kinase that phosphorylates the alpha subunit of eukaryotic translation initiation factor 2 (EIF2S1/eIF-2-alpha) in response to various stress conditions. Key activator of the integrated stress response (ISR) required for adaptation to various stress, such as heme deficiency, oxidative stress, osmotic shock, mitochondrial dysfunction and heat shock. EIF2S1/eIF-2-alpha phosphorylation in response to stress converts EIF2S1/eIF-2-alpha in a global protein synthesis inhibitor, leading to a global attenuation of cap-dependent translation, while concomitantly initiating the preferential translation of ISR-specific mRNAs, such as the transcriptional activator ATF4, and hence allowing ATF4-mediated reprogramming. Acts as a key sensor of heme-deficiency: in normal conditions, binds hemin via a cysteine thiolate and histidine nitrogenous coordination, leading to inhibit the protein kinase activity. This binding occurs with moderate affinity, allowing it to sense the heme concentration within the cell: heme depletion relieves inhibition and stimulates kinase activity, activating the ISR. Thanks to this unique heme-sensing capacity, plays a crucial role to shut off protein synthesis during acute heme-deficient conditions. In red blood cells (RBCs), controls hemoglobin synthesis ensuring a coordinated regulation of the synthesis of its heme and globin moieties. It thereby plays an essential protective role for RBC survival in anemias of iron deficiency. Iron deficiency also triggers activation by full-length DELE1. Also activates the ISR in response to mitochondrial dysfunction: HRI/EIF2AK1 protein kinase activity is activated upon binding to the processed form of DELE1 (S-DELE1), thereby promoting the ATF4-mediated reprogramming. Also acts as an activator of mitophagy in response to mitochondrial damage: catalyzes phosphorylation of eIF-2-alpha (EIF2S1) following activation by S-DELE1, thereby promoting mitochondrial localization of EIF2S1, triggering PRKN-independent mitophagy. This is Eukaryotic translation initiation factor 2-alpha kinase 1 from Rattus norvegicus (Rat).